The primary structure comprises 305 residues: tRNA-cytidine(32) 2-sulfurtransferase (305 aa).

The interval 1 to 20 (MTAVLPLPHPLADPAPRDPR) is disordered. Positions 59 to 64 (SGGKDS) match the PP-loop motif motif. Residues cysteine 134, cysteine 137, and cysteine 225 each contribute to the [4Fe-4S] cluster site. Low complexity predominate over residues 282–293 (DAPPDLAPDPGA). The tract at residues 282-305 (DAPPDLAPDPGAWLTASDATHDSD) is disordered.

It belongs to the TtcA family. Homodimer. The cofactor is Mg(2+). [4Fe-4S] cluster serves as cofactor.

It is found in the cytoplasm. The catalysed reaction is cytidine(32) in tRNA + S-sulfanyl-L-cysteinyl-[cysteine desulfurase] + AH2 + ATP = 2-thiocytidine(32) in tRNA + L-cysteinyl-[cysteine desulfurase] + A + AMP + diphosphate + H(+). Its pathway is tRNA modification. In terms of biological role, catalyzes the ATP-dependent 2-thiolation of cytidine in position 32 of tRNA, to form 2-thiocytidine (s(2)C32). The sulfur atoms are provided by the cysteine/cysteine desulfurase (IscS) system. This chain is tRNA-cytidine(32) 2-sulfurtransferase, found in Xanthomonas oryzae pv. oryzae (strain PXO99A).